The chain runs to 91 residues: Putative septation protein SpoVG (91 aa).

It belongs to the SpoVG family.

Its function is as follows. Could be involved in septation. This is Putative septation protein SpoVG from Clostridium beijerinckii (strain ATCC 51743 / NCIMB 8052) (Clostridium acetobutylicum).